A 351-amino-acid polypeptide reads, in one-letter code: Phosphoribosylformylglycinamidine cyclo-ligase (351 aa).

It belongs to the AIR synthase family.

It localises to the cytoplasm. The enzyme catalyses 2-formamido-N(1)-(5-O-phospho-beta-D-ribosyl)acetamidine + ATP = 5-amino-1-(5-phospho-beta-D-ribosyl)imidazole + ADP + phosphate + H(+). It participates in purine metabolism; IMP biosynthesis via de novo pathway; 5-amino-1-(5-phospho-D-ribosyl)imidazole from N(2)-formyl-N(1)-(5-phospho-D-ribosyl)glycinamide: step 2/2. This is Phosphoribosylformylglycinamidine cyclo-ligase from Burkholderia lata (strain ATCC 17760 / DSM 23089 / LMG 22485 / NCIMB 9086 / R18194 / 383).